A 271-amino-acid polypeptide reads, in one-letter code: Glutamate racemase (271 aa).

Substrate-binding positions include 10–11 and 42–43; these read DS and YG. The active-site Proton donor/acceptor is Cys73. 74–75 lines the substrate pocket; that stretch reads NT. The active-site Proton donor/acceptor is Cys183. Position 184-185 (184-185) interacts with substrate; that stretch reads TH.

This sequence belongs to the aspartate/glutamate racemases family.

It catalyses the reaction L-glutamate = D-glutamate. Its pathway is cell wall biogenesis; peptidoglycan biosynthesis. In terms of biological role, provides the (R)-glutamate required for cell wall biosynthesis. This is Glutamate racemase from Lactococcus lactis subsp. lactis (strain IL1403) (Streptococcus lactis).